Reading from the N-terminus, the 212-residue chain is Thaumatin-like protein 1b (212 aa).

7 cysteine pairs are disulfide-bonded: Cys47–Cys57, Cys62–Cys69, Cys117–Cys200, Cys122–Cys183, Cys130–Cys146, Cys150–Cys159, and Cys160–Cys170.

This sequence belongs to the thaumatin family.

The protein localises to the secreted. The chain is Thaumatin-like protein 1b from Malus domestica (Apple).